The primary structure comprises 92 residues: MKTLVLLSALALLAFQVQADPIQNRDEESKIDEQPGKEDQAVSVSFGDPEGSSLQEECEDLICYCRTRGCKRRERLNGTCRKGHLMYMLWCC.

An N-terminal signal peptide occupies residues 1–19 (MKTLVLLSALALLAFQVQA). Positions 20–57 (DPIQNRDEESKIDEQPGKEDQAVSVSFGDPEGSSLQEE) are excised as a propeptide. The span at 24–40 (NRDEESKIDEQPGKEDQ) shows a compositional bias: basic and acidic residues. Positions 24 to 53 (NRDEESKIDEQPGKEDQAVSVSFGDPEGSS) are disordered. Intrachain disulfides connect Cys-63–Cys-92, Cys-65–Cys-80, and Cys-70–Cys-91.

Belongs to the alpha-defensin family.

The protein resides in the secreted. Functionally, may have microbicidal activities. This Mus musculus (Mouse) protein is Alpha-defensin 25 (Defa25).